Reading from the N-terminus, the 562-residue chain is Tryptophan 2-monooxygenase (562 aa).

Residues Ser54, Glu74, Arg76, Arg82, and Arg104 each contribute to the FMN site. A substrate-binding site is contributed by Arg104.

Belongs to the tryptophan 2-monooxygenase family. It depends on FMN as a cofactor.

The catalysed reaction is L-tryptophan + O2 = indole-3-acetamide + CO2 + H2O. It functions in the pathway plant hormone metabolism; auxin biosynthesis. The polypeptide is Tryptophan 2-monooxygenase (iaaM) (Pantoea agglomerans pv. gypsophilae (Erwinia herbicola)).